Here is a 256-residue protein sequence, read N- to C-terminus: Glycerol-3-phosphate acyltransferase (256 aa).

The next 6 helical transmembrane spans lie at 2–22, 58–78, 90–110, 123–143, 153–173, and 211–231; these read FPYL…SVLW, LAVA…AIGL, SYFI…WFKF, LIVV…IFAF, IIGT…GVMG, and FADG…ILVV.

The protein belongs to the PlsY family. As to quaternary structure, probably interacts with PlsX.

It localises to the cell membrane. It catalyses the reaction an acyl phosphate + sn-glycerol 3-phosphate = a 1-acyl-sn-glycero-3-phosphate + phosphate. It participates in lipid metabolism; phospholipid metabolism. Functionally, catalyzes the transfer of an acyl group from acyl-phosphate (acyl-PO(4)) to glycerol-3-phosphate (G3P) to form lysophosphatidic acid (LPA). This enzyme utilizes acyl-phosphate as fatty acyl donor, but not acyl-CoA or acyl-ACP. This chain is Glycerol-3-phosphate acyltransferase, found in Mesoplasma florum (strain ATCC 33453 / NBRC 100688 / NCTC 11704 / L1) (Acholeplasma florum).